Reading from the N-terminus, the 337-residue chain is Ketol-acid reductoisomerase (NADP(+)) (337 aa).

One can recognise a KARI N-terminal Rossmann domain in the interval 1 to 183 (MAIETLYDSD…GGARAGVIPT (183 aa)). NADP(+) contacts are provided by residues 26-29 (YGSQ), R49, S52, S54, and 84-87 (DTSQ). The active site involves H109. Residue G135 participates in NADP(+) binding. Positions 184-329 (TFKDETETDL…SQLRDLMSWV (146 aa)) constitute a KARI C-terminal knotted domain. Residues D192, E196, E228, and E232 each coordinate Mg(2+). S253 is a substrate binding site.

It belongs to the ketol-acid reductoisomerase family. Mg(2+) serves as cofactor.

It carries out the reaction (2R)-2,3-dihydroxy-3-methylbutanoate + NADP(+) = (2S)-2-acetolactate + NADPH + H(+). The catalysed reaction is (2R,3R)-2,3-dihydroxy-3-methylpentanoate + NADP(+) = (S)-2-ethyl-2-hydroxy-3-oxobutanoate + NADPH + H(+). The protein operates within amino-acid biosynthesis; L-isoleucine biosynthesis; L-isoleucine from 2-oxobutanoate: step 2/4. It functions in the pathway amino-acid biosynthesis; L-valine biosynthesis; L-valine from pyruvate: step 2/4. Functionally, involved in the biosynthesis of branched-chain amino acids (BCAA). Catalyzes an alkyl-migration followed by a ketol-acid reduction of (S)-2-acetolactate (S2AL) to yield (R)-2,3-dihydroxy-isovalerate. In the isomerase reaction, S2AL is rearranged via a Mg-dependent methyl migration to produce 3-hydroxy-3-methyl-2-ketobutyrate (HMKB). In the reductase reaction, this 2-ketoacid undergoes a metal-dependent reduction by NADPH to yield (R)-2,3-dihydroxy-isovalerate. The sequence is that of Ketol-acid reductoisomerase (NADP(+)) from Corynebacterium aurimucosum (strain ATCC 700975 / DSM 44827 / CIP 107346 / CN-1) (Corynebacterium nigricans).